A 462-amino-acid chain; its full sequence is Exodeoxyribonuclease 7 large subunit (462 aa).

It belongs to the XseA family. In terms of assembly, heterooligomer composed of large and small subunits.

It is found in the cytoplasm. The catalysed reaction is Exonucleolytic cleavage in either 5'- to 3'- or 3'- to 5'-direction to yield nucleoside 5'-phosphates.. Bidirectionally degrades single-stranded DNA into large acid-insoluble oligonucleotides, which are then degraded further into small acid-soluble oligonucleotides. In Pectobacterium atrosepticum (strain SCRI 1043 / ATCC BAA-672) (Erwinia carotovora subsp. atroseptica), this protein is Exodeoxyribonuclease 7 large subunit.